A 162-amino-acid chain; its full sequence is D-aminoacyl-tRNA deacylase (162 aa).

Residues 145–146 (GP) carry the Gly-cisPro motif, important for rejection of L-amino acids motif.

This sequence belongs to the DTD family. In terms of assembly, homodimer.

The protein resides in the cytoplasm. The catalysed reaction is glycyl-tRNA(Ala) + H2O = tRNA(Ala) + glycine + H(+). The enzyme catalyses a D-aminoacyl-tRNA + H2O = a tRNA + a D-alpha-amino acid + H(+). An aminoacyl-tRNA editing enzyme that deacylates mischarged D-aminoacyl-tRNAs. Also deacylates mischarged glycyl-tRNA(Ala), protecting cells against glycine mischarging by AlaRS. Acts via tRNA-based rather than protein-based catalysis; rejects L-amino acids rather than detecting D-amino acids in the active site. By recycling D-aminoacyl-tRNA to D-amino acids and free tRNA molecules, this enzyme counteracts the toxicity associated with the formation of D-aminoacyl-tRNA entities in vivo and helps enforce protein L-homochirality. This chain is D-aminoacyl-tRNA deacylase, found in Bifidobacterium longum (strain NCC 2705).